Here is a 459-residue protein sequence, read N- to C-terminus: Putative BTB/POZ domain-containing protein R541 (459 aa).

The BTB domain maps to 76–143; sequence NHITINVGGK…NQKSTNIELY (68 aa).

It belongs to the mimivirus BTB/WD family.

This chain is Putative BTB/POZ domain-containing protein R541, found in Acanthamoeba polyphaga mimivirus (APMV).